A 253-amino-acid polypeptide reads, in one-letter code: ER membrane protein complex subunit 3 (253 aa).

3 helical membrane-spanning segments follow: residues 10–30 (WVLLPISIVMVLTGVLKQYIM), 126–146 (FIPQTIIMWWVNHFFAGFILM), and 176–196 (SISWYFISVLGLNPVYNLIGL).

Belongs to the EMC3 family. Component of the ER membrane protein complex (EMC), which is composed of EMC1, EMC2, EMC3, EMC4, EMC5 and EMC6.

Its subcellular location is the endoplasmic reticulum membrane. In terms of biological role, the EMC seems to be required for efficient folding of proteins in the endoplasmic reticulum (ER). The sequence is that of ER membrane protein complex subunit 3 (AIM27) from Saccharomyces cerevisiae (strain RM11-1a) (Baker's yeast).